Reading from the N-terminus, the 272-residue chain is Shikimate dehydrogenase (NADP(+)) (272 aa).

Shikimate is bound by residues S14–S16 and T61. K65 serves as the catalytic Proton acceptor. E77 lines the NADP(+) pocket. 2 residues coordinate shikimate: N86 and D102. Residues G126–A130, N149–R154, and M213 contribute to the NADP(+) site. Y215 provides a ligand contact to shikimate. NADP(+) is bound at residue G237.

It belongs to the shikimate dehydrogenase family. Homodimer.

It carries out the reaction shikimate + NADP(+) = 3-dehydroshikimate + NADPH + H(+). Its pathway is metabolic intermediate biosynthesis; chorismate biosynthesis; chorismate from D-erythrose 4-phosphate and phosphoenolpyruvate: step 4/7. Involved in the biosynthesis of the chorismate, which leads to the biosynthesis of aromatic amino acids. Catalyzes the reversible NADPH linked reduction of 3-dehydroshikimate (DHSA) to yield shikimate (SA). The protein is Shikimate dehydrogenase (NADP(+)) of Salmonella schwarzengrund (strain CVM19633).